The following is a 338-amino-acid chain: Lipoate-protein ligase A (338 aa).

Residues proline 29–valine 216 form the BPL/LPL catalytic domain. ATP contacts are provided by residues arginine 71, glycine 76–phenylalanine 79, and lysine 134. Lysine 134 is a (R)-lipoate binding site.

This sequence belongs to the LplA family. As to quaternary structure, monomer.

Its subcellular location is the cytoplasm. The enzyme catalyses L-lysyl-[lipoyl-carrier protein] + (R)-lipoate + ATP = N(6)-[(R)-lipoyl]-L-lysyl-[lipoyl-carrier protein] + AMP + diphosphate + H(+). The protein operates within protein modification; protein lipoylation via exogenous pathway; protein N(6)-(lipoyl)lysine from lipoate: step 1/2. Its pathway is protein modification; protein lipoylation via exogenous pathway; protein N(6)-(lipoyl)lysine from lipoate: step 2/2. Catalyzes both the ATP-dependent activation of exogenously supplied lipoate to lipoyl-AMP and the transfer of the activated lipoyl onto the lipoyl domains of lipoate-dependent enzymes. The polypeptide is Lipoate-protein ligase A (Escherichia coli (strain SMS-3-5 / SECEC)).